Consider the following 150-residue polypeptide: Glycine/sarcosine/betaine reductase complex component A (150 aa).

Sec-43 is a catalytic residue. Position 43 (Sec-43) is a non-standard amino acid, selenocysteine.

This sequence belongs to the GrdA family. As to quaternary structure, monomer. Component of the glycine, sarcosine and betaine reductase complexes, together with components B and C.

The enzyme catalyses acetyl phosphate + [thioredoxin]-disulfide + NH4(+) + H2O = [thioredoxin]-dithiol + glycine + phosphate + H(+). It carries out the reaction acetyl phosphate + methylamine + [thioredoxin]-disulfide + H2O = sarcosine + [thioredoxin]-dithiol + phosphate + H(+). It catalyses the reaction acetyl phosphate + trimethylamine + [thioredoxin]-disulfide + H2O = glycine betaine + [thioredoxin]-dithiol + phosphate + H(+). Its function is as follows. In the first step of glycine, betaine and sarcosine reductases, the substrate is bound to component PB via a Schiff base intermediate. Then the PB-activated substrate is nucleophilically attacked by the selenol anion of component PA to transform it to a carboxymethylated selenoether and the respective amine. By action of component PC, acetyl phosphate is formed, leaving component PA in its oxidized state. Finally component PA becomes reduced by the thioredoxin system to start a new catalytic cycle of reductive deamination. The polypeptide is Glycine/sarcosine/betaine reductase complex component A (grdA) (Gottschalkia purinilytica (Clostridium purinilyticum)).